A 215-amino-acid chain; its full sequence is FBD domain-containing protein At3g58975 (215 aa).

One can recognise an FBD domain in the interval Arg-122–Leu-199.

The protein is FBD domain-containing protein At3g58975 of Arabidopsis thaliana (Mouse-ear cress).